A 487-amino-acid polypeptide reads, in one-letter code: UDP-glucosyl transferase 73CC6 (487 aa).

Catalysis depends on His17, which acts as the Proton acceptor. Asp114 acts as the Charge relay in catalysis. Residues Ser282, Trp346, Ala347, His364, Asn368, Ser369, Glu372, and Tyr386 each coordinate UDP.

The protein belongs to the UDP-glycosyltransferase family. Mainly expressed in flowers and flower buds and, to a lesser extent, in leaves, stems and roots.

It participates in secondary metabolite biosynthesis; terpenoid biosynthesis. Component of the oleanane-type triterpene saponins (e.g. saponarioside A and saponarioside B) biosynthetic pathway, leading to the production of natural products with detergent properties used as traditional sources of soap. A glycosyltransferase that mediates the conversion of QA-di to QA-tri via the elongation of the C-3 sugar chain with a D-xylose. This is UDP-glucosyl transferase 73CC6 from Saponaria officinalis (Common soapwort).